A 589-amino-acid polypeptide reads, in one-letter code: MAPGRSGYRLRFRSGARISGDSEQTQGFVQEPGSCAEDPGGIVLKRVIVIDNYDSFVYNIVQYIGEVEPDCEIEVFRNDEITIEEIERKNPTHIVISPGPGRPEEAGISVDVVRHFSGKVPILGVCLGHQVIGYAFGGKIVHAKRILHGKTSKIVHNGKGVFSGVKNPLVATRYHSLVVEEASLPEVLEITAKSDDGEIMGLQHKEHPTFGVQFHPESVLTEEGKRIIKNFLNIQDIQVKKVSEETEIDIVSALKKLVEFEDLTFEESRQVMNFIMSGNATDAQIAGFLVALRMKEETGDELGGMASVMREKSIHIKAPSPRTVDTCGTGGDGFGTFNISTTTAFVVAAAGIPVAKHGNRSVSSKVGSADVLEAGGYKLEKTPEEMERELKETGFSFLFAPLLHPAMKHVMPARRQLKIRTAFNLLGPITNPARVKYQVVGVFDLSFASKLATALQRLGTERSAVVNGGFTDELTTCGKNNLLLVTQEEIVPMVLDPEELGLKSGDPEELKGPSDPKEAYRMMESVLKGEASRTQVETVALNAGVVFWLVGECDTIKDGVGKALDLIRTGEAYKKLREVMDYQKTLGNS.

The region spanning 46-241 (RVIVIDNYDS…LNIQDIQVKK (196 aa)) is the Glutamine amidotransferase type-1 domain. L-glutamine is bound at residue 99 to 101 (GPG). The Nucleophile; for GATase activity role is filled by C126. Residues Q130 and 176–177 (SL) each bind L-glutamine. Active-site for GATase activity residues include H215 and E217. The anthranilate phosphoribosyltransferase stretch occupies residues 253–589 (ALKKLVEFED…MDYQKTLGNS (337 aa)).

It in the C-terminal section; belongs to the anthranilate phosphoribosyltransferase family. In terms of assembly, heterotetramer consisting of two non-identical subunits: a beta subunit (TrpG) and a large alpha subunit (TrpE).

It catalyses the reaction chorismate + L-glutamine = anthranilate + pyruvate + L-glutamate + H(+). The catalysed reaction is N-(5-phospho-beta-D-ribosyl)anthranilate + diphosphate = 5-phospho-alpha-D-ribose 1-diphosphate + anthranilate. It participates in amino-acid biosynthesis; L-tryptophan biosynthesis; L-tryptophan from chorismate: step 1/5. The protein operates within amino-acid biosynthesis; L-tryptophan biosynthesis; L-tryptophan from chorismate: step 2/5. Part of a heterotetrameric complex that catalyzes the two-step biosynthesis of anthranilate, an intermediate in the biosynthesis of L-tryptophan. In the first step, the glutamine-binding beta subunit (TrpG) of anthranilate synthase (AS) provides the glutamine amidotransferase activity which generates ammonia as a substrate that, along with chorismate, is used in the second step, catalyzed by the large alpha subunit of AS (TrpE) to produce anthranilate. In the absence of TrpG, TrpE can synthesize anthranilate directly from chorismate and high concentrations of ammonia. In addition to synthesizing anthranilate, it also catalyzes the second step of the pathway, the transfer of the phosphoribosyl group of 5-phosphorylribose-1-pyrophosphate (PRPP) to anthranilate. This Thermotoga maritima (strain ATCC 43589 / DSM 3109 / JCM 10099 / NBRC 100826 / MSB8) protein is Bifunctional protein TrpGD (trpGD).